The primary structure comprises 757 residues: Catalase-peroxidase (757 aa).

The segment at 1 to 28 is disordered; the sequence is MENQSNDISKCPFHNGSMDNQAASGTKN. Polar residues predominate over residues 17–28; that stretch reads SMDNQAASGTKN. Positions 100 to 247 form a cross-link, tryptophyl-tyrosyl-methioninium (Trp-Tyr) (with M-273); sequence WHSAGTYRVH…LAAVQMGLIY (148 aa). Residue His101 is the Proton acceptor of the active site. The tryptophyl-tyrosyl-methioninium (Tyr-Met) (with W-100) cross-link spans 247 to 273; that stretch reads YVNPEGPDGNPDPILAAKDIRDTFGRM. Residue His288 participates in heme b binding.

This sequence belongs to the peroxidase family. Peroxidase/catalase subfamily. As to quaternary structure, homodimer or homotetramer. The cofactor is heme b. Post-translationally, formation of the three residue Trp-Tyr-Met cross-link is important for the catalase, but not the peroxidase activity of the enzyme.

It carries out the reaction H2O2 + AH2 = A + 2 H2O. It catalyses the reaction 2 H2O2 = O2 + 2 H2O. Bifunctional enzyme with both catalase and broad-spectrum peroxidase activity. This Flavobacterium johnsoniae (strain ATCC 17061 / DSM 2064 / JCM 8514 / BCRC 14874 / CCUG 350202 / NBRC 14942 / NCIMB 11054 / UW101) (Cytophaga johnsonae) protein is Catalase-peroxidase.